Here is a 118-residue protein sequence, read N- to C-terminus: Large ribosomal subunit protein bL19 (118 aa).

This sequence belongs to the bacterial ribosomal protein bL19 family.

This protein is located at the 30S-50S ribosomal subunit interface and may play a role in the structure and function of the aminoacyl-tRNA binding site. This Coprothermobacter proteolyticus (strain ATCC 35245 / DSM 5265 / OCM 4 / BT) protein is Large ribosomal subunit protein bL19.